A 296-amino-acid polypeptide reads, in one-letter code: Uracil phosphoribosyltransferase, chloroplastic (296 aa).

Residues Met1–Arg61 constitute a chloroplast transit peptide. Ala2 is subject to N-acetylalanine. Arg148–Ile151 contributes to the GTP binding site. 5-phospho-alpha-D-ribose 1-diphosphate-binding positions include Arg158, Arg183, Asp211, Thr216 to Thr219, and Asp282. Gly281–Ala283 lines the uracil pocket.

This sequence belongs to the UPRTase family. Requires Mg(2+) as cofactor.

The protein localises to the plastid. It localises to the chloroplast. It catalyses the reaction UMP + diphosphate = 5-phospho-alpha-D-ribose 1-diphosphate + uracil. Its pathway is pyrimidine metabolism; UMP biosynthesis via salvage pathway; UMP from uracil: step 1/1. Its activity is regulated as follows. Allosterically activated by GTP. Uracil phosphoribosyltransferase (UPRT) that catalyzes the conversion of uracil and 5-phospho-alpha-D-ribose 1-diphosphate (PRPP) to UMP and diphosphate. Is probably the only functional UPRT, since the dual-domain proteins of the UKL family seem to lack this activity. The sequence is that of Uracil phosphoribosyltransferase, chloroplastic (UPP) from Arabidopsis thaliana (Mouse-ear cress).